Reading from the N-terminus, the 357-residue chain is Cell division control protein 10 (357 aa).

The Septin-type G domain maps to 34-306 (RGFQFNIMVV…ETFRSKQLIA (273 aa)). Residues 44 to 51 (GRSGLGKS) are G1 motif. Residues 44–51 (GRSGLGKS), T78, G104, 184–192 (KSDSLTLDE), G240, and R255 each bind GTP. The interval 101 to 104 (DTPG) is G3 motif. The tract at residues 183-186 (AKSD) is G4 motif. Residues 310-357 (NASNPNRQSQLQKDQGQTSQQSNQDLKNTSGVPNAPMFQSTTGTAAAR) are disordered.

This sequence belongs to the TRAFAC class TrmE-Era-EngA-EngB-Septin-like GTPase superfamily. Septin GTPase family.

Its subcellular location is the bud neck. Its function is as follows. Plays a role in the cell cycle. Involved in the formation of the ring of filaments in the neck region at the mother-bud junction during mitosis. The protein is Cell division control protein 10 (CDC10) of Candida albicans (strain SC5314 / ATCC MYA-2876) (Yeast).